The sequence spans 224 residues: tRNA (guanine-N(7)-)-methyltransferase (224 aa).

Residues Glu-56, Glu-81, Asp-108, and Asp-131 each contribute to the S-adenosyl-L-methionine site. Asp-131 is a catalytic residue. Substrate contacts are provided by residues Lys-135, Asp-167, and 202 to 205 (TKFE).

It belongs to the class I-like SAM-binding methyltransferase superfamily. TrmB family.

The catalysed reaction is guanosine(46) in tRNA + S-adenosyl-L-methionine = N(7)-methylguanosine(46) in tRNA + S-adenosyl-L-homocysteine. It functions in the pathway tRNA modification; N(7)-methylguanine-tRNA biosynthesis. Its function is as follows. Catalyzes the formation of N(7)-methylguanine at position 46 (m7G46) in tRNA. The sequence is that of tRNA (guanine-N(7)-)-methyltransferase from Nitrosomonas eutropha (strain DSM 101675 / C91 / Nm57).